The primary structure comprises 124 residues: Small ribosomal subunit protein uS12 (124 aa).

A disordered region spans residues 1–25; that stretch reads MPTINQLIRKPRKSQKEKTASPALQ. Asp-89 carries the post-translational modification 3-methylthioaspartic acid.

The protein belongs to the universal ribosomal protein uS12 family. Part of the 30S ribosomal subunit. Contacts proteins S8 and S17. May interact with IF1 in the 30S initiation complex.

With S4 and S5 plays an important role in translational accuracy. In terms of biological role, interacts with and stabilizes bases of the 16S rRNA that are involved in tRNA selection in the A site and with the mRNA backbone. Located at the interface of the 30S and 50S subunits, it traverses the body of the 30S subunit contacting proteins on the other side and probably holding the rRNA structure together. The combined cluster of proteins S8, S12 and S17 appears to hold together the shoulder and platform of the 30S subunit. The chain is Small ribosomal subunit protein uS12 from Borrelia duttonii (strain Ly).